The primary structure comprises 72 residues: Candidate secreted effector protein MPL124499 (72 aa).

The N-terminal stretch at 1–21 (MKLSIFAAIFMAFVSLNQVFG) is a signal peptide.

The protein belongs to the CPGH1 family.

Its subcellular location is the secreted. It localises to the host cell. The protein resides in the host cytoplasm. The protein localises to the host nucleus. Rust effector delivered into infected tissues to modulate host functions and contribute to pathogen virulence. Enhances leaf colonization by the bacteria Pseudomonas syringae and the oomycete Hyaloperonospora arabidopsidis pathogens in an Arabidopsis thaliana infection model. The sequence is that of Candidate secreted effector protein MPL124499 from Melampsora larici-populina (strain 98AG31 / pathotype 3-4-7) (Poplar leaf rust fungus).